We begin with the raw amino-acid sequence, 203 residues long: Large ribosomal subunit protein bL25 (203 aa).

It belongs to the bacterial ribosomal protein bL25 family. CTC subfamily. In terms of assembly, part of the 50S ribosomal subunit; part of the 5S rRNA/L5/L18/L25 subcomplex. Contacts the 5S rRNA. Binds to the 5S rRNA independently of L5 and L18.

Its function is as follows. This is one of the proteins that binds to the 5S RNA in the ribosome where it forms part of the central protuberance. This Wolbachia pipientis wMel protein is Large ribosomal subunit protein bL25.